The following is a 1157-amino-acid chain: uncharacterized protein (1157 aa).

An N-terminal signal peptide occupies residues methionine 1–glycine 18. The N-palmitoyl cysteine moiety is linked to residue cysteine 19. The S-diacylglycerol cysteine moiety is linked to residue cysteine 19. 4 helical membrane passes run leucine 292–glycine 312, leucine 394–phenylalanine 414, alanine 423–phenylalanine 443, and isoleucine 458–isoleucine 478. Residues glutamine 1134 to lysine 1157 are disordered. Basic and acidic residues predominate over residues lysine 1148 to lysine 1157.

The protein belongs to the TrbL/VirB6 family.

Its subcellular location is the cell membrane. This is an uncharacterized protein from Rickettsia bellii (strain RML369-C).